A 270-amino-acid chain; its full sequence is Interleukin-33 (270 aa).

Residues 1–65 (MKPKMKYSTN…EACYFRRETT (65 aa)) are homeodomain-like HTH domain. The propeptide occupies 1–94 (MKPKMKYSTN…CQQQSTVESF (94 aa)). Residues 64–111 (TTKRPSLKTDRKHKRHLVLAACQQQSTVESFAFGISGVQKYTRALHDS) are interaction with RELA.

This sequence belongs to the IL-1 family. Highly divergent. In terms of assembly, forms a 1:1:1 heterotrimeric complex with its primary high-affinity receptor IL1RL1 and the coreceptor IL1RAP. Interacts with cargo receptor TMED10; the interaction mediates the translocation from the cytoplasm into the ERGIC (endoplasmic reticulum-Golgi intermediate compartment) and thereby secretion. In terms of processing, the full-length protein can be released from cells and is able to signal via the IL1RL1/ST2 receptor. However, proteolytic processing by CELA1, CSTG/cathepsin G and ELANE/neutrophil elastase produces C-terminal peptides that are more active than the unprocessed full-length protein. May also be proteolytically processed by calpains. Proteolytic cleavage mediated by apoptotic caspases including CASP3 and CASP7 results in IL33 inactivation. In vitro proteolytic cleavage by CASP1 was reported but could not be confirmed in vivo suggesting that IL33 is probably not a direct substrate for that caspase.

Its subcellular location is the nucleus. The protein localises to the chromosome. It is found in the cytoplasm. The protein resides in the cytoplasmic vesicle. It localises to the secretory vesicle. Its subcellular location is the secreted. Cytokine that binds to and signals through the IL1RL1/ST2 receptor which in turn activates NF-kappa-B and MAPK signaling pathways in target cells. Involved in the maturation of Th2 cells inducing the secretion of T-helper type 2-associated cytokines. Also involved in activation of mast cells, basophils, eosinophils and natural killer cells. Acts as a chemoattractant for Th2 cells, and may function as an 'alarmin', that amplifies immune responses during tissue injury. Induces rapid UCP2-dependent mitochondrial rewiring that attenuates the generation of reactive oxygen species and preserves the integrity of Krebs cycle required for persistent production of itaconate and subsequent GATA3-dependent differentiation of inflammation-resolving alternatively activated macrophages. Functionally, in quiescent endothelia the uncleaved form is constitutively and abundantly expressed, and acts as a chromatin-associated nuclear factor with transcriptional repressor properties, it may sequester nuclear NF-kappaB/RELA, lowering expression of its targets. This form is rapidely lost upon angiogenic or pro-inflammatory activation. The chain is Interleukin-33 (IL33) from Pongo abelii (Sumatran orangutan).